Consider the following 55-residue polypeptide: Large ribosomal subunit protein bL33 (55 aa).

This sequence belongs to the bacterial ribosomal protein bL33 family.

The sequence is that of Large ribosomal subunit protein bL33 from Wigglesworthia glossinidia brevipalpis.